The sequence spans 131 residues: Large ribosomal subunit protein bL19 (131 aa).

The protein belongs to the bacterial ribosomal protein bL19 family.

Its function is as follows. This protein is located at the 30S-50S ribosomal subunit interface and may play a role in the structure and function of the aminoacyl-tRNA binding site. In Rhodopseudomonas palustris (strain BisB18), this protein is Large ribosomal subunit protein bL19.